The primary structure comprises 928 residues: MEPRDGSPEARSSDSESASASSSGSERDAGPEPDKAPRRLNKRRFPGLRLFGHRKAITKSGLQHLAPPPPTPGAPCSESERQIRSTVDWSESATYGEHIWFETNVSGDFCYVGEQYCVARMLKSVSRRKCAACKIVVHTPCIEQLEKINFRCKPSFRESGSRNVREPTFVRHHWVHRRRQDGKCRHCGKGFQQKFTFHSKEIVAISCSWCKQAYHSKVSCFMLQQIEEPCSLGVHAAVVIPPTWILRARRPQNTLKASKKKKRASFKRKSSKKGPEEGRWRPFIIRPTPSPLMKPLLVFVNPKSGGNQGAKIIQSFLWYLNPRQVFDLSQGGPKEALEMYRKVHNLRILACGGDGTVGWILSTLDQLRLKPPPPVAILPLGTGNDLARTLNWGGGYTDEPVSKILSHVEEGNVVQLDRWDLHAEPNPEAGPEDRDEGATDRLPLDVFNNYFSLGFDAHVTLEFHESREANPEKFNSRFRNKMFYAGTAFSDFLMGSSKDLAKHIRVVCDGMDLTPKIQDLKPQCVVFLNIPRYCAGTMPWGHPGEHHDFEPQRHDDGYLEVIGFTMTSLAALQVGGHGERLTQCREVVLTTSKAIPVQVDGEPCKLAASRIRIALRNQATMVQKAKRRSAAPLHSDQQPVPEQLRIQVSRVSMHDYEALHYDKEQLKEASVPLGTVVVPGDSDLELCRAHIERLQQEPDGAGAKSPTCQKLSPKWCFLDATTASRFYRIDRAQEHLNYVTEIAQDEIYILDPELLGASARPDLPTPTSPLPTSPCSPTPRSLQGDAAPPQGEELIEAAKRNDFCKLQELHRAGGDLMHRDEQSRTLLHHAVSTGSKDVVRYLLDHAPPEILDAVEENGETCLHQAAALGQRTICHYIVEAGASLMKTDQQGDTPRQRAEKAQDTELAAYLENRQHYQMIQREDQETAV.

Residues 1 to 14 (MEPRDGSPEARSSD) are compositionally biased toward basic and acidic residues. 2 disordered regions span residues 1 to 46 (MEPR…RRFP) and 59 to 82 (KSGLQHLAPPPPTPGAPCSESERQ). Positions 15-24 (SESASASSSG) are enriched in low complexity. Residues 25–37 (SERDAGPEPDKAP) are compositionally biased toward basic and acidic residues. Phorbol-ester/DAG-type zinc fingers lie at residues 98–152 (HIWF…NFRC) and 172–230 (HHWV…EEPC). A disordered region spans residues 251–280 (PQNTLKASKKKKRASFKRKSSKKGPEEGRW). A compositionally biased stretch (basic residues) spans 257-272 (ASKKKKRASFKRKSSK). The segment at 259–273 (KKKKRASFKRKSSKK) is MARCKS homology. Residues 278–416 (GRWRPFIIRP…HVEEGNVVQL (139 aa)) are mediates interaction with RASGRP1. The region spanning 291-425 (PLMKPLLVFV…LDRWDLHAEP (135 aa)) is the DAGKc domain. Residues 361–369 (LSTLDQLRL) carry the Nuclear export signal motif. Position 705 is a phosphoserine (S705). The segment at 759-788 (ARPDLPTPTSPLPTSPCSPTPRSLQGDAAP) is disordered. The segment covering 763-777 (LPTPTSPLPTSPCSP) has biased composition (pro residues). S781 carries the phosphoserine modification. ANK repeat units follow at residues 822 to 852 (QSRTLLHHAVSTGSKDVVRYLLDHAPPEILD) and 857 to 886 (NGETCLHQAAALGQRTICHYIVEAGASLMK). The short motif at 924 to 928 (QETAV) is the PDZ-binding element.

The protein belongs to the eukaryotic diacylglycerol kinase family. As to quaternary structure, interacts (via PDZ-binding motif) with the PDZ domain of the syntrophin SNTG1 and that of SNX27. Interacts with IRS1 in the absence of insulin; insulin stimulation decreases this interaction. Found in a ternary complex with IRS1 and PIP5K1A in the absence of insulin. Interacts with PIP5K1A. Forms a signaling complex with RASGRP1 and HRAS. Post-translationally, phosphorylation of the MARCKS homology domain by PKC reduces nuclear accumulation of DGK-zeta. Highest levels in brain, and substantial levels in skeletal muscle, heart, and pancreas. As to expression, predominantly expressed in muscle.

Its subcellular location is the nucleus. It localises to the cytoplasm. The protein localises to the cytosol. The protein resides in the cell membrane. It is found in the cell projection. Its subcellular location is the lamellipodium. The catalysed reaction is a 1,2-diacyl-sn-glycerol + ATP = a 1,2-diacyl-sn-glycero-3-phosphate + ADP + H(+). It catalyses the reaction a 1-O-alkyl-sn-glycerol + ATP = a 1-O-alkyl-sn-glycero-3-phosphate + ADP + H(+). The enzyme catalyses 1-O-alkyl-2-acyl-sn-glycerol + ATP = 1-O-alkyl-2-acyl-sn-glycero-3-phosphate + ADP + H(+). It carries out the reaction 1,2-didecanoyl-sn-glycerol + ATP = 1,2-didecanoyl-sn-glycero-3-phosphate + ADP + H(+). The catalysed reaction is 1,2-ditetradecanoyl-sn-glycerol + ATP = 1,2-ditetradecanoyl-sn-glycero-3-phosphate + ADP + H(+). It catalyses the reaction 1-hexadecanoyl-2-(9Z-octadecenoyl)-sn-glycerol + ATP = 1-hexadecanoyl-2-(9Z-octadecenoyl)-sn-glycero-3-phosphate + ADP + H(+). The enzyme catalyses 1-hexadecanoyl-2-(5Z,8Z,11Z,14Z-eicosatetraenoyl)-sn-glycerol + ATP = 1-hexadecanoyl-2-(5Z,8Z,11Z,14Z-eicosatetraenoyl)-sn-glycero-3-phosphate + ADP + H(+). It carries out the reaction 1-octadecanoyl-2-(9Z-octadecenoyl)-sn-glycerol + ATP = 1-octadecanoyl-2-(9Z-octadecenoyl)-sn-glycero-3-phosphate + ADP + H(+). The catalysed reaction is 1-octadecanoyl-2-(5Z,8Z,11Z,14Z-eicosatetraenoyl)-sn-glycerol + ATP = 1-octadecanoyl-2-(5Z,8Z,11Z,14Z-eicosatetraenoyl)-sn-glycero-3-phosphate + ADP + H(+). It catalyses the reaction 1-octadecanoyl-2-(4Z,7Z,10Z,13Z,16Z,19Z-docosahexaenoyl)-sn-glycerol + ATP = 1-octadecanoyl-2-(4Z,7Z,10Z,13Z,16Z,19Z-docosahexaenoyl)-sn-glycero-3-phosphate + ADP + H(+). The enzyme catalyses 1,2-di-(9Z-octadecenoyl)-sn-glycerol + ATP = 1,2-di-(9Z-octadecenoyl)-sn-glycero-3-phosphate + ADP + H(+). It carries out the reaction 1-(9Z-octadecenoyl)-2-hexadecanoyl-sn-glycerol + ATP = 1-(9Z)-octadecenoyl-2-hexadecanoyl-sn-glycero-3-phosphate + ADP + H(+). The catalysed reaction is 1-eicosanoyl-2-(5Z,8Z,11Z,14Z)-eicosatetraenoyl-sn-glycerol + ATP = 1-eicosanoyl-2-(5Z,8Z,11Z,14Z)-eicosatetraenoyl-sn-glycero-3-phosphate + ADP + H(+). It catalyses the reaction 1,2-di-(5Z,8Z,11Z,14Z)-eicosatetraenoyl-sn-glycerol + ATP = 1,2-di-(5Z,8Z,11Z,14Z)-eicosatetraenoyl-sn-glycero-3-phosphate + ADP + H(+). The enzyme catalyses 1-O-hexadecyl-2-acetyl-sn-glycerol + ATP = 1-O-hexadecyl-2-acetyl-sn-glycero-3-phosphate + ADP + H(+). It carries out the reaction 1-O-hexadecyl-2-(5Z,8Z,11Z,14Z-eicosatetraenoyl)-sn-glycerol + ATP = 1-O-hexadecyl-2-(5Z,8Z,11Z,14Z-eicosatetraenoyl)-sn-glycero-3-phosphate + ADP + H(+). The catalysed reaction is 1-O-hexadecyl-2-(9Z-octadecenoyl)-sn-glycerol + ATP = 1-O-hexadecyl-2-(9Z-octadecenoyl)-sn-glycero-3-phosphate + ADP + H(+). It catalyses the reaction 1-O-hexadecyl-sn-glycerol + ATP = 1-O-hexadecyl-sn-glycero-3-phosphate + ADP + H(+). The protein operates within lipid metabolism; glycerolipid metabolism. Activated by 1,2-diacyl-sn-glycero-3-phosphate/phosphatidic acid irrespective of its acyl chain composition. In terms of biological role, diacylglycerol kinase that converts diacylglycerol/DAG into phosphatidic acid/phosphatidate/PA and regulates the respective levels of these two bioactive lipids. Thereby, acts as a central switch between the signaling pathways activated by these second messengers with different cellular targets and opposite effects in numerous biological processes. Also plays an important role in the biosynthesis of complex lipids. Does not exhibit an acyl chain-dependent substrate specificity among diacylglycerol species. Can also phosphorylate 1-alkyl-2-acylglycerol in vitro but less efficiently and with a preference for alkylacylglycerols containing an arachidonoyl group. The biological processes it is involved in include T cell activation since it negatively regulates T-cell receptor signaling which is in part mediated by diacylglycerol. By generating phosphatidic acid, stimulates PIP5KIA activity which regulates actin polymerization. Through the same mechanism could also positively regulate insulin-induced translocation of SLC2A4 to the cell membrane. Functionally, regulates RASGRP1 activity. Its function is as follows. Does not regulate RASGRP1 activity. The chain is Diacylglycerol kinase zeta from Homo sapiens (Human).